Reading from the N-terminus, the 89-residue chain is Small ribosomal subunit protein uS17 (89 aa).

This sequence belongs to the universal ribosomal protein uS17 family. Part of the 30S ribosomal subunit.

In terms of biological role, one of the primary rRNA binding proteins, it binds specifically to the 5'-end of 16S ribosomal RNA. The polypeptide is Small ribosomal subunit protein uS17 (Leptospira interrogans serogroup Icterohaemorrhagiae serovar Lai (strain 56601)).